A 214-amino-acid polypeptide reads, in one-letter code: uncharacterized protein (214 aa).

The transit peptide at 1–49 (MATRGAVAAAASTIWKHRRNPSLRSLSRHFNPNFNHRIIPTGFKYQVRA) directs the protein to the chloroplast.

The protein localises to the plastid. The protein resides in the chloroplast. This is an uncharacterized protein from Arabidopsis thaliana (Mouse-ear cress).